Consider the following 179-residue polypeptide: Inner membrane-spanning protein YciB (179 aa).

5 helical membrane-spanning segments follow: residues Ile22–Val42, Met50–Asn70, Trp76–Met96, Leu121–Leu141, and Phe149–Ile169.

Belongs to the YciB family.

It is found in the cell inner membrane. Plays a role in cell envelope biogenesis, maintenance of cell envelope integrity and membrane homeostasis. The chain is Inner membrane-spanning protein YciB from Salmonella agona (strain SL483).